Here is a 533-residue protein sequence, read N- to C-terminus: MTQAEIKLCSLLLQEHFGEIVEKIGVHLIRTGSQPLRVIAHDTGTSLDQVKKALCVLIQHNLVTYQVHKRGVVEYEAQCNRVLRMLRYPRYIYTAKTLYSDTGELIVEELLLNGKMTMSAVVKKVADRLTETMEDGKTMDYAEVSNTFVRLVDTHFVQRCPLVPATENSDTGPPPPAPTLVVSEKDMYLVPKLSLIGKGKRRRSSDEDATGEPKAKRPKQTTDNKEPIPDDGIYWQANLDRFHQHFRDQAIVSAVANRMDQTSSEIVRTMLRMSEVTTPSGAPFTQPLSSNEIFRSLPVGYNISKQVLDQYLTLLADDPLEFVGKSGDSGGGMYVINLHKALGSLATATLESVVQERFGSRCARIFRLVLQKKHLEQKQVEDFAMIPAKEAKDMLYKMLSENFISLQEIPKTPDHAPSRTFYLYTVNILSAARMLLHRCYKSVANLIERRQFETKENKRLLEKSQRVEAIIASMQATGAEEAQLQEIEEMITAPERQQLETLKRNVNKLDACEIQVDETIFLLESYIESTMKR.

Phosphoserine is present on serine 194. Residues 197 to 230 are disordered; that stretch reads GKGKRRRSSDEDATGEPKAKRPKQTTDNKEPIPD. Residues 211 to 228 are compositionally biased toward basic and acidic residues; sequence GEPKAKRPKQTTDNKEPI.

The protein belongs to the eukaryotic RPC3/POLR3C RNA polymerase subunit family. Component of the RNA polymerase III complex consisting of 17 subunits: a ten-subunit horseshoe-shaped catalytic core composed of POLR3A/RPC1, POLR3B/RPC2, POLR1C/RPAC1, POLR1D/RPAC2, POLR3K/RPC10, POLR2E/RPABC1, POLR2F/RPABC2, POLR2H/RPABC3, POLR2K/RPABC4 and POLR2L/RPABC5; a mobile stalk composed of two subunits POLR3H/RPC8 and CRCP/RPC9, protruding from the core and functioning primarily in transcription initiation; and additional subunits homologous to general transcription factors of the RNA polymerase II machinery, POLR3C/RPC3-POLR3F/RPC6-POLR3G/RPC7 heterotrimer required for transcription initiation and POLR3D/RPC4-POLR3E/RPC5 heterodimer involved in both transcription initiation and termination. Directly interacts with POLR3G/RPC7 and POLR3GL. Directly interacts with POLR3F/RPC6. Interacts with GTF3C4. As part of the RNA polymerase III complex, interacts with PKP2.

The protein localises to the nucleus. DNA-dependent RNA polymerase catalyzes the transcription of DNA into RNA using the four ribonucleoside triphosphates as substrates. Specific peripheric component of RNA polymerase III (Pol III) which synthesizes small non-coding RNAs including 5S rRNA, snRNAs, tRNAs and miRNAs from at least 500 distinct genomic loci. Part of POLR3C/RPC3-POLR3F/RPC6-POLR3G/RPC7 heterotrimer, coordinates the dynamics of Pol III stalk and clamp modules during the transition from apo to elongation state. Pol III plays a key role in sensing and limiting infection by intracellular bacteria and DNA viruses. Acts as a nuclear and cytosolic DNA sensor involved in innate immune response. Can sense non-self dsDNA that serves as template for transcription into dsRNA. The non-self RNA polymerase III transcripts, such as Epstein-Barr virus-encoded RNAs (EBERs) induce type I interferon and NF-kappa-B through the RIG-I pathway. Preferentially binds single-stranded DNA (ssDNA) in a sequence-independent manner. In Bos taurus (Bovine), this protein is DNA-directed RNA polymerase III subunit RPC3 (POLR3C).